The chain runs to 229 residues: Glycerol-3-phosphate acyltransferase (229 aa).

The next 6 membrane-spanning stretches (helical) occupy residues W2–W22, L56–I76, F93–F113, L129–L149, S151–L171, and A178–A198.

Belongs to the PlsY family. As to quaternary structure, probably interacts with PlsX.

It localises to the cell inner membrane. The enzyme catalyses an acyl phosphate + sn-glycerol 3-phosphate = a 1-acyl-sn-glycero-3-phosphate + phosphate. Its pathway is lipid metabolism; phospholipid metabolism. In terms of biological role, catalyzes the transfer of an acyl group from acyl-phosphate (acyl-PO(4)) to glycerol-3-phosphate (G3P) to form lysophosphatidic acid (LPA). This enzyme utilizes acyl-phosphate as fatty acyl donor, but not acyl-CoA or acyl-ACP. In Salinibacter ruber (strain DSM 13855 / M31), this protein is Glycerol-3-phosphate acyltransferase.